Reading from the N-terminus, the 426-residue chain is Glucan 1,3-beta-glucosidase (426 aa).

The first 20 residues, 1-20 (MLYPRALLPAAVALASLVLA), serve as a signal peptide directing secretion. Residue Glu-208 is the Proton donor of the active site. Disulfide bonds link Cys-290/Cys-416 and Cys-315/Cys-343. The active-site Nucleophile is the Glu-307.

The protein belongs to the glycosyl hydrolase 5 (cellulase A) family.

The protein resides in the secreted. The catalysed reaction is Successive hydrolysis of beta-D-glucose units from the non-reducing ends of (1-&gt;3)-beta-D-glucans, releasing alpha-glucose.. Beta-glucanases participate in the metabolism of beta-glucan, the main structural component of the cell wall. It could also function biosynthetically as a transglycosylase. In Blumeria graminis (Powdery mildew), this protein is Glucan 1,3-beta-glucosidase.